The following is a 1255-amino-acid chain: Receptor tyrosine-protein kinase erbB-2 (1255 aa).

The first 22 residues, 1 to 22 (MELAALCRWGLLLALLPPGAAS), serve as a signal peptide directing secretion. The Extracellular portion of the chain corresponds to 23–652 (TQVCTGTDMK…PAEQRASPLT (630 aa)). Cys26 and Cys53 are disulfide-bonded. Residues Asn68 and Asn124 are each glycosylated (N-linked (GlcNAc...) asparagine). Disulfide bonds link Cys162–Cys192, Cys195–Cys204, Cys199–Cys212, Cys220–Cys227, Cys224–Cys235, Cys236–Cys244, Cys240–Cys252, Cys255–Cys264, Cys268–Cys295, Cys299–Cys311, Cys315–Cys331, Cys334–Cys338, Cys342–Cys367, Cys475–Cys504, Cys511–Cys520, and Cys515–Cys528. Thr182 is modified (phosphothreonine). A glycan (N-linked (GlcNAc...) asparagine) is linked at Asn187. Asn259 carries N-linked (GlcNAc...) asparagine glycosylation. The N-linked (GlcNAc...) asparagine glycan is linked to Asn530. Cystine bridges form between Cys531/Cys540, Cys544/Cys560, Cys563/Cys576, Cys567/Cys584, Cys587/Cys596, Cys600/Cys623, Cys626/Cys634, and Cys630/Cys642. Asn571 is a glycosylation site (N-linked (GlcNAc...) asparagine). A glycan (N-linked (GlcNAc...) asparagine) is linked at Asn629. The chain crosses the membrane as a helical span at residues 653 to 675 (SIISAVVGILLVVVLGVVFGILI). Residues 676 to 689 (KRRQQKIRKYTMRR) form a required for interaction with KPNB1 and EEA1 region. The Nuclear localization signal signature appears at 676-689 (KRRQQKIRKYTMRR). Residues 676–1255 (KRRQQKIRKY…PEYLGLDVPV (580 aa)) are Cytoplasmic-facing. The Protein kinase domain maps to 720-987 (LRKVKVLGSG…RMARDPQRFV (268 aa)). ATP contacts are provided by residues 726 to 734 (LGSGAFGTV) and Lys753. The active-site Proton acceptor is Asp845. Tyr877 bears the Phosphotyrosine mark. 2 disordered regions span residues 1035–1179 (PAPG…GKNG) and 1196–1255 (YLTP…DVPV). Phosphoserine is present on residues Ser1054, Ser1078, Ser1083, and Ser1107. Phosphotyrosine occurs at positions 1112 and 1139. Residues 1146–1155 (RPQPPSPREG) are compositionally biased toward pro residues. Ser1151 is modified (phosphoserine). A Phosphothreonine modification is found at Thr1166. The interval 1195–1197 (EYL) is interaction with PIK3C2B. Residue Tyr1196 is modified to Phosphotyrosine. A Phosphotyrosine; by autocatalysis modification is found at Tyr1248.

The protein belongs to the protein kinase superfamily. Tyr protein kinase family. EGF receptor subfamily. Homodimer. Heterodimer with EGFR, ERBB3 and ERBB4. Part of a complex with EGFR and either PIK3C2A or PIK3C2B. May interact with PIK3C2B when phosphorylated on Tyr-1196. Interacts with PLXNB1. Interacts (when phosphorylated on Tyr-1248) with MEMO1. Interacts with MUC1; the interaction is enhanced by heregulin (HRG). Interacts (when phosphorylated on Tyr-1139) with GRB7 (via SH2 domain). Interacts (when phosphorylated on Tyr-1248) with ERBIN. Interacts with KPNB1, RANBP2, EEA1, CRM1 and CLTC. Interacts with PTK6. Interacts with RPA194 and ACTB. Interacts with PRKCABP, SRC and MYOC. Interacts (preferentially with the tyrosine phosphorylated form) with CPNE3; this interaction occurs at the cell membrane and is increased in a growth factor heregulin-dependent manner. Interacts with HSP90AA1 and HSP90AB1 in an ATP-dependent manner; the interaction suppresses ERBB2 kinase activity. Interacts with SORL1; this interaction regulates ERBB2 subcellular distribution by promoting its recycling after internalization from endosomes back to the plasma membrane, hence stimulates ERBB2-mediated signaling. Interacts with SH3BGRL. Interacts with ROR1. Post-translationally, autophosphorylated. Autophosphorylation occurs in trans, i.e. one subunit of the dimeric receptor phosphorylates tyrosine residues on the other subunit. Ligand-binding increases phosphorylation on tyrosine residues. Signaling via SEMA4C promotes phosphorylation at Tyr-1248. Dephosphorylated by PTPN12. Expressed in a variety of tumor tissues including primary breast tumors and tumors from small bowel, esophagus, kidney and mouth.

Its subcellular location is the cell membrane. The protein localises to the cell projection. It is found in the ruffle membrane. The protein resides in the early endosome. It localises to the cytoplasm. Its subcellular location is the perinuclear region. The protein localises to the nucleus. It carries out the reaction L-tyrosyl-[protein] + ATP = O-phospho-L-tyrosyl-[protein] + ADP + H(+). Its activity is regulated as follows. Activated by dimerization. Not activated by EGF, TGF-alpha and amphiregulin. Interaction with PTK6 increases its intrinsic kinase activity. Its function is as follows. Protein tyrosine kinase that is part of several cell surface receptor complexes, but that apparently needs a coreceptor for ligand binding. Essential component of a neuregulin-receptor complex, although neuregulins do not interact with it alone. GP30 is a potential ligand for this receptor. Regulates outgrowth and stabilization of peripheral microtubules (MTs). Upon ERBB2 activation, the MEMO1-RHOA-DIAPH1 signaling pathway elicits the phosphorylation and thus the inhibition of GSK3B at cell membrane. This prevents the phosphorylation of APC and CLASP2, allowing its association with the cell membrane. In turn, membrane-bound APC allows the localization of MACF1 to the cell membrane, which is required for microtubule capture and stabilization. Functionally, in the nucleus is involved in transcriptional regulation. Associates with the 5'-TCAAATTC-3' sequence in the PTGS2/COX-2 promoter and activates its transcription. Implicated in transcriptional activation of CDKN1A; the function involves STAT3 and SRC. Involved in the transcription of rRNA genes by RNA Pol I and enhances protein synthesis and cell growth. The protein is Receptor tyrosine-protein kinase erbB-2 (ERBB2) of Homo sapiens (Human).